The following is a 128-amino-acid chain: Large ribosomal subunit protein bL17 (128 aa).

Belongs to the bacterial ribosomal protein bL17 family. In terms of assembly, part of the 50S ribosomal subunit. Contacts protein L32.

This chain is Large ribosomal subunit protein bL17, found in Hydrogenovibrio crunogenus (strain DSM 25203 / XCL-2) (Thiomicrospira crunogena).